The primary structure comprises 74 residues: Translation initiation factor IF-1 (74 aa).

Residues 1 to 72 (MSKEDAIEVE…NKGRITYRLK (72 aa)) enclose the S1-like domain.

Belongs to the IF-1 family. As to quaternary structure, component of the 30S ribosomal translation pre-initiation complex which assembles on the 30S ribosome in the order IF-2 and IF-3, IF-1 and N-formylmethionyl-tRNA(fMet); mRNA recruitment can occur at any time during PIC assembly.

It is found in the cytoplasm. Its function is as follows. One of the essential components for the initiation of protein synthesis. Stabilizes the binding of IF-2 and IF-3 on the 30S subunit to which N-formylmethionyl-tRNA(fMet) subsequently binds. Helps modulate mRNA selection, yielding the 30S pre-initiation complex (PIC). Upon addition of the 50S ribosomal subunit IF-1, IF-2 and IF-3 are released leaving the mature 70S translation initiation complex. The sequence is that of Translation initiation factor IF-1 from Synechococcus sp. (strain JA-3-3Ab) (Cyanobacteria bacterium Yellowstone A-Prime).